Here is a 315-residue protein sequence, read N- to C-terminus: Calcium homeostasis modulator protein 4 (315 aa).

At 1–14 (MSPDLNCISSSLLR) the chain is on the cytoplasmic side. A helical membrane pass occupies residues 15 to 37 (SEPCINSLIAILTVCGQQLFSSY). Residues 38 to 48 (TFSCPCQVGKN) lie on the Extracellular side of the membrane. Intrachain disulfides connect Cys-41/Cys-132 and Cys-43/Cys-163. The helical transmembrane segment at 49–71 (FYYGSAFLVVPALILLIAGYALR) threads the bilayer. Residues 72–104 (GQMWTVASEYCCCSCTPPYRRSSPLERRLACLM) lie on the Cytoplasmic side of the membrane. The chain crosses the membrane as a helical span at residues 105–130 (FFDITGRALVAPLTWLTVTLLTGTYY). Residues 131 to 184 (ECAASEFASVDQYPMFANVTPSKREEMLAGFPCYTSAPSDVIPIRDEVALLHRY) lie on the Extracellular side of the membrane. The chain crosses the membrane as a helical span at residues 185 to 208 (QSQMLGWILVVLATIALLLSKCLA). Residues 209–315 (RCCSPLTSLQ…DRQEGIEMKP (107 aa)) lie on the Cytoplasmic side of the membrane.

It belongs to the CALHM family. In terms of assembly, oligomerizes to form decameric and undecameric channels. Two hemichannels can assemble in a tail-to-tail manner to form a gap junction.

It is found in the cell membrane. May assemble to form gap junction channel-like structures involved in intercellular communication. Channel gating and ion conductance are likely regulated by membrane lipids rather than by membrane depolarization or extracellular calcium levels. This Mus musculus (Mouse) protein is Calcium homeostasis modulator protein 4.